A 235-amino-acid polypeptide reads, in one-letter code: 2-C-methyl-D-erythritol 4-phosphate cytidylyltransferase (235 aa).

It belongs to the IspD/TarI cytidylyltransferase family. IspD subfamily.

It catalyses the reaction 2-C-methyl-D-erythritol 4-phosphate + CTP + H(+) = 4-CDP-2-C-methyl-D-erythritol + diphosphate. Its pathway is isoprenoid biosynthesis; isopentenyl diphosphate biosynthesis via DXP pathway; isopentenyl diphosphate from 1-deoxy-D-xylulose 5-phosphate: step 2/6. In terms of biological role, catalyzes the formation of 4-diphosphocytidyl-2-C-methyl-D-erythritol from CTP and 2-C-methyl-D-erythritol 4-phosphate (MEP). The sequence is that of 2-C-methyl-D-erythritol 4-phosphate cytidylyltransferase from Ectopseudomonas mendocina (strain ymp) (Pseudomonas mendocina).